The primary structure comprises 91 residues: CRISPR-associated endoribonuclease Cas2 (91 aa).

A Mg(2+)-binding site is contributed by D14.

It belongs to the CRISPR-associated endoribonuclease Cas2 protein family. In terms of assembly, homodimer, forms a heterotetramer with a Cas1 homodimer. It depends on Mg(2+) as a cofactor.

Functionally, CRISPR (clustered regularly interspaced short palindromic repeat), is an adaptive immune system that provides protection against mobile genetic elements (viruses, transposable elements and conjugative plasmids). CRISPR clusters contain sequences complementary to antecedent mobile elements and target invading nucleic acids. CRISPR clusters are transcribed and processed into CRISPR RNA (crRNA). Functions as a ssRNA-specific endoribonuclease. Involved in the integration of spacer DNA into the CRISPR cassette. The sequence is that of CRISPR-associated endoribonuclease Cas2 from Nanoarchaeum equitans (strain Kin4-M).